Here is an 802-residue protein sequence, read N- to C-terminus: Serine/threonine-protein kinase zyg-8 (802 aa).

Residues 1–13 (MPQTSAWQLNDTT) are compositionally biased toward polar residues. The segment at 1–102 (MPQTSAWQLN…SAPSTSSAHR (102 aa)) is disordered. A compositionally biased stretch (pro residues) spans 15-24 (RPPPPPPPPG). The span at 89–99 (SPSSSAPSTSS) shows a compositional bias: low complexity. 2 consecutive Doublecortin domains span residues 211-298 (KRLR…VDYS) and 340-423 (RIIK…ADDL). A disordered region spans residues 430-470 (HKSVGSGTSSNMRRTSRRSTMPNRNESLRHDRSGSVIPDQD). Low complexity predominate over residues 434 to 454 (GSGTSSNMRRTSRRSTMPNRN). The Protein kinase domain maps to 482-743 (FQLVRLIGDG…AGELLNDEWM (262 aa)). Residues 488–496 (IGDGNTAVV) and Lys-512 each bind ATP. Catalysis depends on Asp-604, which acts as the Proton acceptor.

Belongs to the protein kinase superfamily. CAMK Ser/Thr protein kinase family. CaMK subfamily. In terms of assembly, interacts with tac-1. In terms of tissue distribution, expressed in AFD thermosensory neurons. Expressed in cells near the nerve ring, in motor neurons in the ventral nerve cord and in the six touch receptor neurons including ALML/R, PLML/R and AVM and PVM. Expressed in hypodermal and neural tissues and in the germline.

The protein resides in the cytoplasm. Its subcellular location is the cytoskeleton. The protein localises to the microtubule organizing center. It is found in the centrosome. It localises to the spindle. It catalyses the reaction L-seryl-[protein] + ATP = O-phospho-L-seryl-[protein] + ADP + H(+). The catalysed reaction is L-threonyl-[protein] + ATP = O-phospho-L-threonyl-[protein] + ADP + H(+). Functionally, probable kinase. Kinase activity may be involved in positioning of spindle poles in meiosis and mitosis. Plays a role in spindle positioning during asymmetric division of one-cell stage embryos. Affects spindle position by promoting microtubule assembly during anaphase. Plays a role in the assembly and stability of oocyte spindle, perhaps balancing the forces in the spindle and maintaining their morphology during metaphase. Plays a role in cell division and in embryonic viability up until gastrulation. Required for neuronal morphology and polarity and restricting ectopic process outgrowth; probably as a result of a role in maintaining microtubule integrity. Involved in maintaining neuronal microtubule number, length and packing. May promote axonal and synaptic growth. Plays a role in regulating thermotaxis responses in AFD thermosensory neurons. Required for touch sensitivity in adult touch response receptor neurons. The polypeptide is Serine/threonine-protein kinase zyg-8 (Caenorhabditis elegans).